The primary structure comprises 362 residues: MKSSILVKLETLVERYEEIQHLLGDPGIIGDQNKFRALSKEYSQLEDITQCFQAYLGAKDDLEAAEEMAKDDDPEMREMAQEEVKESKANILRLEDELQVLLIPKDPNDDRNCFVEIRAGAGGDEAGIFAGDLFRMYSRYAERRGWRIEVINENRSEQGGYKEMIAKVSGDGAYGVLKFESGGHRVQRVPATESQGRVHTSACTVAVMPEVPEAEIPEINTGDLKIDTFRSSGAGGQHVNTTDSAIRITHLPTGIVVECQDERSQHKNKAKAMSVLAARITKAEEEKRHAEEASTRRNLLGSGDRSDRIRTYNYPQGRVSDHRITLTLYRLNEVMEGDMDSLIQPVIQEHQADELAAMAEQN.

N5-methylglutamine is present on Q237. The span at 285–295 (EEKRHAEEAST) shows a compositional bias: basic and acidic residues. Residues 285–311 (EEKRHAEEASTRRNLLGSGDRSDRIRT) are disordered.

Belongs to the prokaryotic/mitochondrial release factor family. Methylated by PrmC. Methylation increases the termination efficiency of RF1.

It is found in the cytoplasm. Peptide chain release factor 1 directs the termination of translation in response to the peptide chain termination codons UAG and UAA. The chain is Peptide chain release factor 1 from Photobacterium profundum (strain SS9).